The chain runs to 207 residues: Small ribosomal subunit protein uS4 (207 aa).

The disordered stretch occupies residues 31–53; that stretch reads KAKFDSKPGQHGRTSGARTSDYG. Residues 97–157 enclose the S4 RNA-binding domain; sequence CRLDNVVYRM…EKSKKQARIV (61 aa).

This sequence belongs to the universal ribosomal protein uS4 family. As to quaternary structure, part of the 30S ribosomal subunit. Contacts protein S5. The interaction surface between S4 and S5 is involved in control of translational fidelity.

One of the primary rRNA binding proteins, it binds directly to 16S rRNA where it nucleates assembly of the body of the 30S subunit. Functionally, with S5 and S12 plays an important role in translational accuracy. This chain is Small ribosomal subunit protein uS4, found in Acidovorax ebreus (strain TPSY) (Diaphorobacter sp. (strain TPSY)).